A 235-amino-acid polypeptide reads, in one-letter code: Casparian strip membrane protein 2 (235 aa).

Over 1-70 the chain is Cytoplasmic; sequence MTSESATVIQ…RSGAEGFRRC (70 aa). A helical membrane pass occupies residues 71–91; sequence LAVIDFLLRVAAFGPTLAAAI. Residues 92–118 lie on the Extracellular side of the membrane; the sequence is STGTADERLSVFTNFFQFHARFDDFPA. The helical transmembrane segment at 119–139 threads the bilayer; it reads FTFFLVANAVAAGYLVLSLPF. Residues 140 to 162 lie on the Cytoplasmic side of the membrane; it reads SVVVILRPNKATGGVRLLLLLCD. The helical transmembrane segment at 163–183 threads the bilayer; the sequence is VLIMALLTAAGAAAAAIVYVA. The Extracellular portion of the chain corresponds to 184–210; that stretch reads HSGNRRANWVPICMQFHGFCQRTSGSV. Residues 211 to 231 form a helical membrane-spanning segment; sequence VATFLAVLVFIVLILMAACVI. The Cytoplasmic portion of the chain corresponds to 232–235; sequence RRSK.

This sequence belongs to the Casparian strip membrane proteins (CASP) family. Homodimer and heterodimers.

It is found in the cell membrane. Its function is as follows. Regulates membrane-cell wall junctions and localized cell wall deposition. Required for establishment of the Casparian strip membrane domain (CSD) and the subsequent formation of Casparian strips, a cell wall modification of the root endodermis that determines an apoplastic barrier between the intraorganismal apoplasm and the extraorganismal apoplasm and prevents lateral diffusion. This is Casparian strip membrane protein 2 from Sorghum bicolor (Sorghum).